A 1233-amino-acid polypeptide reads, in one-letter code: STE20-like serine/threonine-protein kinase (1233 aa).

At S14 the chain carries Phosphoserine. The 259-residue stretch at 34-292 (WEIIGELGDG…TSQLLQHPFV (259 aa)) folds into the Protein kinase domain. ATP-binding positions include 40 to 48 (LGDGAFGKV) and K63. D155 (proton acceptor) is an active-site residue. Residue T183 is modified to Phosphothreonine. Position 189 is a phosphoserine (S189). A disordered region spans residues 309–351 (AEVTEEVEDGKEEDEEEEAENALPIPANKRASSDLSIASSEED). Residues 312–328 (TEEVEDGKEEDEEEEAE) are compositionally biased toward acidic residues. Phosphoserine occurs at positions 340, 341, 344, 347, 348, 354, and 372. Basic and acidic residues predominate over residues 363–399 (VSERTEQSTSEDKFSNKILNEKPTTDGPEKAVDEHAS). 4 disordered regions span residues 363-453 (VSER…ENNR), 498-650 (VSQE…SIEE), 663-761 (ALGS…SGDL), and 772-791 (AKDS…KTLK). The span at 432–441 (PDTQDQQTVD) shows a compositional bias: polar residues. Over residues 518–529 (LTKEETQEKLGK) the composition is skewed to basic and acidic residues. Residues S543, S561, and S566 each carry the phosphoserine modification. Basic and acidic residues predominate over residues 598–607 (GGERVEDKQP). Polar residues predominate over residues 619–630 (QLTSTSETTRAT). A phosphoserine mark is found at S643, S647, and S666. Over residues 690-701 (AESQAPAASQPS) the composition is skewed to low complexity. The span at 746–761 (TDSGTGSTVENSSGDL) shows a compositional bias: polar residues. A phosphoserine mark is found at S775 and S777. The residue at position 812 (T812) is a Phosphothreonine. S816 bears the Phosphoserine mark. The stretch at 824-1067 (LRRQELRELR…LKNRQTQERA (244 aa)) forms a coiled coil. The region spanning 873-908 (DQEIENLEKQQKQTIERLEQEHTNRLRDEAKRIKGE) is the UVR domain. The segment at 944–963 (KRRKEELAQSQHAQEQEFVQ) is disordered. Positions 954 to 963 (QHAQEQEFVQ) are enriched in low complexity. T1095 carries the post-translational modification Phosphothreonine. The stretch at 1107 to 1181 (AAQEEKRQKN…ELKEWREKLR (75 aa)) forms a coiled coil. The interval 1109 to 1129 (QEEKRQKNERMAQHQKHESQM) is disordered.

This sequence belongs to the protein kinase superfamily. STE Ser/Thr protein kinase family. STE20 subfamily. Proteolytically cleaved by caspase-3. Post-translationally, autophosphorylated. As to expression, ubiquitously expressed.

Its subcellular location is the cytoplasm. It carries out the reaction L-seryl-[protein] + ATP = O-phospho-L-seryl-[protein] + ADP + H(+). It catalyses the reaction L-threonyl-[protein] + ATP = O-phospho-L-threonyl-[protein] + ADP + H(+). Mediates apoptosis and actin stress fiber dissolution. This Mus musculus (Mouse) protein is STE20-like serine/threonine-protein kinase (Slk).